We begin with the raw amino-acid sequence, 493 residues long: METFQCLTLFLLFISTVFILKRKFSHKPNLPPSPPKLPILGNFHQLGTLVHRAVTVLAAKYGPLMLLHFGKTPVLIVSSQETAKEIMKTHDLALANRPLTTAARALLYDCTDISFAPYGEYWREMKKMAVLNLLSIKKIQSFRSVREELASDMIKEITRLSKTGAPVDVTNMLYHFSEDLLFRCTLGFKPKGQHKFQKLSRDFLDLVGAFCFNDFFPGMAWMDALTGLNRKLKKGSRELDDFVDELIEERIAMVKDGVEPNEFLDLLLHTHRDTTQEIKLTRDNVKAIILDTFLGGIDLPASVMEWAMAELMRNPSKMKIAQEEVRKVVGNKNKVDEDDVYQMNFLKSAVKETLRLHPPAPLLFARESYTSINVENYIIPPYTSVMINIWHIQRDPKLWDKAEEFIPERFMNSGIDYKSHDYEFIPFGSGRRGCPGMSFGVAAVEFAVANLLYWFDWKFVGDTTPETLDMTEDYCFALFKKKPLHFIPISRSS.

The helical transmembrane segment at 1–21 (METFQCLTLFLLFISTVFILK) threads the bilayer. Cys-434 is a heme binding site.

The protein belongs to the cytochrome P450 family. It depends on heme as a cofactor.

Its subcellular location is the membrane. The catalysed reaction is (-)-bursehernin + reduced [NADPH--hemoprotein reductase] + O2 = (-)-5'-demethylyatein + oxidized [NADPH--hemoprotein reductase] + H2O + H(+). The protein operates within aromatic compound metabolism; phenylpropanoid biosynthesis. Functionally, cytochrome P450 involved in the biosynthesis of etoposide, a chemotherapeutic compound of the topoisomerase inhibitor family. Catalyzes the conversion of bursehernin to demethylyatein. The protein is Desmethylyatein synthase of Sinopodophyllum hexandrum (Himalayan may apple).